A 345-amino-acid polypeptide reads, in one-letter code: Viral Fc-gamma receptor-like protein UL119 (345 aa).

Residues 1 to 23 form the signal peptide; the sequence is MCSVLAIALVVALLGDMHPGVKS. The interval 23 to 43 is disordered; the sequence is SSTTSAVTSPSNTTVTSTTSI. The Virion surface segment spans residues 24–293; that stretch reads STTSAVTSPS…IKSDPLFEDR (270 aa). N-linked (GlcNAc...) asparagine; by host glycosylation is found at N34, N48, N95, N104, N148, N179, N198, N217, N225, N241, N244, and N260. In terms of domain architecture, Ig-like V-type spans 91–190; that stretch reads QVSLNATCKV…TWDLFTYPIY (100 aa). A helical transmembrane segment spans residues 294–314; it reads LLAYGVLAFLVFMVIILLYVT. Residues 315–345 lie on the Intravirion side of the membrane; that stretch reads YMLARRRDWSYKRLEEPVEEKKHPVPYFKQW.

It localises to the virion membrane. Serves as a receptor for the Fc part of human IgG. May thus be involved in interfering with host Ig-mediated immune responses. The sequence is that of Viral Fc-gamma receptor-like protein UL119 (UL119/UL118) from Homo sapiens (Human).